The primary structure comprises 468 residues: Phosphomethylpyrimidine synthase (468 aa).

Substrate contacts are provided by residues asparagine 80, methionine 109, tyrosine 138, histidine 173, 193–195 (SRG), 234–237 (DGLR), and glutamate 273. Position 277 (histidine 277) interacts with Zn(2+). Substrate is bound at residue tyrosine 300. Histidine 341 serves as a coordination point for Zn(2+). Cysteine 421, cysteine 424, and cysteine 429 together coordinate [4Fe-4S] cluster.

Belongs to the ThiC family. As to quaternary structure, homodimer. The cofactor is [4Fe-4S] cluster.

The catalysed reaction is 5-amino-1-(5-phospho-beta-D-ribosyl)imidazole + S-adenosyl-L-methionine = 4-amino-2-methyl-5-(phosphooxymethyl)pyrimidine + CO + 5'-deoxyadenosine + formate + L-methionine + 3 H(+). Its pathway is cofactor biosynthesis; thiamine diphosphate biosynthesis. Catalyzes the synthesis of the hydroxymethylpyrimidine phosphate (HMP-P) moiety of thiamine from aminoimidazole ribotide (AIR) in a radical S-adenosyl-L-methionine (SAM)-dependent reaction. The protein is Phosphomethylpyrimidine synthase of Anaeromyxobacter sp. (strain Fw109-5).